Reading from the N-terminus, the 65-residue chain is Large ribosomal subunit protein uL29 (65 aa).

Belongs to the universal ribosomal protein uL29 family.

This is Large ribosomal subunit protein uL29 from Acidovorax ebreus (strain TPSY) (Diaphorobacter sp. (strain TPSY)).